Consider the following 62-residue polypeptide: U-myrmeciitoxin(01)-Mg3a (62 aa).

The signal sequence occupies residues 1–24 (MKTTVILLLAIAIIFAIMTTLTSA).

As to expression, expressed by the venom gland.

The protein resides in the secreted. May have antimicrobial properties, like most ant linear peptides. The sequence is that of U-myrmeciitoxin(01)-Mg3a from Myrmecia gulosa (Red bulldog ant).